An 865-amino-acid polypeptide reads, in one-letter code: Alanine--tRNA ligase (865 aa).

Histidine 568, histidine 572, cysteine 670, and histidine 674 together coordinate Zn(2+).

The protein belongs to the class-II aminoacyl-tRNA synthetase family. It depends on Zn(2+) as a cofactor.

Its subcellular location is the cytoplasm. The catalysed reaction is tRNA(Ala) + L-alanine + ATP = L-alanyl-tRNA(Ala) + AMP + diphosphate. Catalyzes the attachment of alanine to tRNA(Ala) in a two-step reaction: alanine is first activated by ATP to form Ala-AMP and then transferred to the acceptor end of tRNA(Ala). Also edits incorrectly charged Ser-tRNA(Ala) and Gly-tRNA(Ala) via its editing domain. In Vibrio campbellii (strain ATCC BAA-1116), this protein is Alanine--tRNA ligase.